We begin with the raw amino-acid sequence, 195 residues long: Protein Nef (195 aa).

The N-myristoyl glycine; by host moiety is linked to residue G2. An N-terminal; associates with the host plasma membrane region spans residues 2 to 53 (GNIFGRWPGARKAIEDLHNTSSEPVGQASQDLQNKGGLTTNTLGTSADVLEY). The interval 7–22 (RWPGARKAIEDLHNTS) is necessary for MHC-I internalization. Positions 59 to 61 (EEE) are acidic. An SH3-binding region spans residues 65 to 74 (PVRPAVPMRP). The SH3-binding; interaction with Src family tyrosine kinases stretch occupies residues 65–74 (PVRPAVPMRP). Residues 68 to 71 (PAVP) carry the PxxP motif. Positions 104-120 (AILDTWMYNTQGVFPDW) are mediates dimerization. Residues 144–171 (VDPPEDDEKNILLHPACSHGTTDPDGET) form a binding to ATP6V1H region. Residues 155-156 (LL) carry the Di-leucine internalization motif; necessary for CD4 internalization motif.

The protein belongs to the lentivirus primate group Nef protein family. In terms of assembly, homodimer.

Its subcellular location is the host cell membrane. It is found in the host cytoplasm. It localises to the host perinuclear region. The protein localises to the virion. The protein resides in the secreted. Functionally, factor of infectivity and pathogenicity, required for optimal virus replication. Alters numerous pathways of T-lymphocyte function and down-regulates immunity surface molecules in order to evade host defense and increase viral infectivity. Alters the functionality of other immunity cells, like dendritic cells, monocytes/macrophages and NK cells. One of the earliest and most abundantly expressed viral proteins. In infected CD4(+) T-lymphocytes, down-regulates the surface MHC-I, mature MHC-II, CD4, CD28 and probably other immunity surface molecules. In consequence infected cells are masked for immune recognition by cytotoxic T-lymphocytes. Decreasing the number of immune receptors also prevents reinfection by more HIV particles (superinfection). Its function is as follows. Bypasses host T-cell signaling by inducing a transcriptional program nearly identical to that of anti-CD3 cell activation. Interaction with TCR-zeta chain up-regulates the Fas ligand (FasL). Increasing surface FasL molecules and decreasing surface MHC-I molecules on infected CD4(+) cells send attacking cytotoxic CD8+ T-lymphocytes into apoptosis. In terms of biological role, plays a role in optimizing the host cell environment for viral replication without causing cell death by apoptosis. Protects the infected cells from apoptosis in order to keep them alive until the next virus generation is ready to strike. This Pan troglodytes (Chimpanzee) protein is Protein Nef.